The chain runs to 266 residues: Phage-like element PBSX protein XkdC (266 aa).

Residue 124-131 coordinates ATP; sequence GQPGSGKT.

To B.subtilis YqaM.

Functionally, may function as a transcriptional antiterminator. This Bacillus subtilis (strain 168) protein is Phage-like element PBSX protein XkdC (xkdC).